Consider the following 125-residue polypeptide: Small ribosomal subunit protein uS13 (125 aa).

Positions 92–125 (RRSLPVRGQRTRTNARTRKGKRKTVAGKKKAVKK) are disordered.

Belongs to the universal ribosomal protein uS13 family. Part of the 30S ribosomal subunit. Forms a loose heterodimer with protein S19. Forms two bridges to the 50S subunit in the 70S ribosome.

Its function is as follows. Located at the top of the head of the 30S subunit, it contacts several helices of the 16S rRNA. In the 70S ribosome it contacts the 23S rRNA (bridge B1a) and protein L5 of the 50S subunit (bridge B1b), connecting the 2 subunits; these bridges are implicated in subunit movement. Contacts the tRNAs in the A and P-sites. The chain is Small ribosomal subunit protein uS13 from Pelodictyon phaeoclathratiforme (strain DSM 5477 / BU-1).